The sequence spans 443 residues: Xaa-Pro dipeptidase (443 aa).

Residues Asp-246, Asp-257, His-339, Glu-384, and Glu-423 each coordinate Mn(2+).

The protein belongs to the peptidase M24B family. Bacterial-type prolidase subfamily. It depends on Mn(2+) as a cofactor.

It catalyses the reaction Xaa-L-Pro dipeptide + H2O = an L-alpha-amino acid + L-proline. Splits dipeptides with a prolyl residue in the C-terminal position. This chain is Xaa-Pro dipeptidase, found in Escherichia fergusonii (strain ATCC 35469 / DSM 13698 / CCUG 18766 / IAM 14443 / JCM 21226 / LMG 7866 / NBRC 102419 / NCTC 12128 / CDC 0568-73).